Consider the following 136-residue polypeptide: Urease subunit beta (136 aa).

The protein belongs to the urease beta subunit family. In terms of assembly, heterotrimer of UreA (gamma), UreB (beta) and UreC (alpha) subunits. Three heterotrimers associate to form the active enzyme.

It is found in the cytoplasm. The catalysed reaction is urea + 2 H2O + H(+) = hydrogencarbonate + 2 NH4(+). The protein operates within nitrogen metabolism; urea degradation; CO(2) and NH(3) from urea (urease route): step 1/1. The chain is Urease subunit beta from Staphylococcus aureus (strain Mu3 / ATCC 700698).